The sequence spans 1017 residues: Putative calcium-transporting ATPase 13, plasma membrane-type (1017 aa).

An N-acetylmethionine modification is found at Met1. Residues 1–147 are Cytoplasmic-facing; it reads MRRNVSDHAE…NTYTRQPSKG (147 aa). Residues 20–31 are interaction with calmodulin; sequence LLELPKTLSKSN. Residues 148 to 168 form a helical membrane-spanning segment; the sequence is LFHFVVEAFKDLTILILLGCA. Residues 169–186 lie on the Lumenal side of the membrane; the sequence is TLSLGFGIKEHGLKEGWY. Residues 187–207 form a helical membrane-spanning segment; sequence DGGSIFVAVFLVVAVSAVSNF. The Cytoplasmic portion of the chain corresponds to 208 to 336; the sequence is RQNRQFDKLS…NEQTPLQSRL (129 aa). The chain crosses the membrane as a helical span at residues 337-356; the sequence is DKLTSSIGKVGLLVAFLVLL. Topologically, residues 357-393 are lumenal; sequence VLLIRYFTGTTKDESGNREYNGKTTKSDEIVNAVVKM. A helical transmembrane segment spans residues 394–411; it reads VAAAVTIIVVAIPEGLPL. At 412 to 802 the chain is on the cytoplasmic side; the sequence is AVTLTLAYSM…KWGRCVYNNI (391 aa). Residue Asp449 is the 4-aspartylphosphate intermediate of the active site. Mg(2+) is bound by residues Asp747 and Asp751. Residues 803 to 821 form a helical membrane-spanning segment; the sequence is QKFIQFQLTVNVAALVINF. The Lumenal segment spans residues 822–832; the sequence is VAAVSAGDVPL. The chain crosses the membrane as a helical span at residues 833–853; the sequence is TAVQLLWVNLIMDTLGALALA. Residues 854 to 873 lie on the Cytoplasmic side of the membrane; the sequence is TEKPTNDLMKKKPIGRVAPL. The chain crosses the membrane as a helical span at residues 874-896; sequence ITNIMWRNLLAQAFYQISVLLVL. Residues 897–905 lie on the Lumenal side of the membrane; the sequence is QFRGRSIFN. A helical transmembrane segment spans residues 906 to 926; sequence VTEKVKNTLIFNTFVLCQVFN. Residues 927–944 are Cytoplasmic-facing; that stretch reads EFNARSLEKKNVFKGLHK. A helical membrane pass occupies residues 945-966; that stretch reads NRLFIGIIVVTVVLQVVMVEFL. Over 967-976 the chain is Lumenal; the sequence is KRFADTERLN. Residues 977 to 998 traverse the membrane as a helical segment; sequence LGQWGVCIAIAAASWPIGWLVK. Residues 999–1002 lie on the Cytoplasmic side of the membrane; the sequence is SVPV.

It belongs to the cation transport ATPase (P-type) (TC 3.A.3) family. Type IIB subfamily.

The protein resides in the membrane. The catalysed reaction is Ca(2+)(in) + ATP + H2O = Ca(2+)(out) + ADP + phosphate + H(+). With respect to regulation, activated by calmodulin. Functionally, this magnesium-dependent enzyme catalyzes the hydrolysis of ATP coupled with the translocation of calcium from the cytosol out of the cell or into organelles. In Arabidopsis thaliana (Mouse-ear cress), this protein is Putative calcium-transporting ATPase 13, plasma membrane-type (ACA13).